Reading from the N-terminus, the 524-residue chain is MLLRSVWYKLGSLLIILPLTGCGYVRLKRANFQTDFTINRIPTQGDVYHDNYDLTFSLNFATSSKDSYGTGWLIDWKGDENKPSNTDPFLIYLATNLHVVDALRNPQDYEPYNKDSNGQDYGNRDITHFFALGKYTDPGLLGVETKEQSAFISIQTSAIPKTAYTANDFVDYQYDSLTKQWNKKSDQKDQTQEQTVIGQSWSYKPAYADFAVIEVPLFLDNVRDKQVFDYFVKPAIETYKKLGDTAQLFTEQNLKELEKETYIMLGYPVVESNIYAHILGQGKELRVTQQVNNQPVKKNYVLQTITKEQHTLDITREIPTLIQNKSLSGDFVGSKLLSQEEQQQEHAFLGNLNQGIIDFARLSNFNLQYHNREYQQYGKGLALANTNFSGGSSGTLVLNQQKQISGVYFGVLEFGGTNGTNRESSIGVGQILRVKDDAQLQQHSHNNLLSQLGSSHNSITYDIIFGNKDTKNYYAQFAKKHQTHLYSQISSSNQQELKYVDNDPNLKIKEEAAKSTVQNLTVYS.

Positions 1-21 are cleaved as a signal peptide; the sequence is MLLRSVWYKLGSLLIILPLTG. A lipid anchor (N-palmitoyl cysteine) is attached at cysteine 22. Cysteine 22 carries S-diacylglycerol cysteine lipidation.

This sequence belongs to the MG067/MG068/MG395 family.

It localises to the cell membrane. This is an uncharacterized protein from Mycoplasma pneumoniae (strain ATCC 29342 / M129 / Subtype 1) (Mycoplasmoides pneumoniae).